We begin with the raw amino-acid sequence, 170 residues long: Photosystem II extrinsic protein V (170 aa).

Residues 1–33 form the signal peptide; it reads MASLFASLGRSLIKLLIVLPVIIGLSISSPAMA. Heme c-binding residues include cysteine 70, cysteine 73, histidine 74, and histidine 125.

This sequence belongs to the cytochrome c family. PsbV subfamily. As to quaternary structure, PSII is composed of 1 copy each of membrane proteins PsbA, PsbB, PsbC, PsbD, PsbE, PsbF, PsbH, PsbI, PsbJ, PsbK, PsbL, PsbM, PsbT, PsbX, PsbY, Psb30/Ycf12, peripheral proteins PsbO, CyanoQ (PsbQ), PsbU, PsbV and a large number of cofactors. It forms dimeric complexes. It depends on heme c as a cofactor.

The protein resides in the cellular thylakoid membrane. Its function is as follows. One of the extrinsic, lumenal subunits of photosystem II (PSII). PSII is a light-driven water plastoquinone oxidoreductase, using light energy to abstract electrons from H(2)O, generating a proton gradient subsequently used for ATP formation. The extrinsic proteins stabilize the structure of photosystem II oxygen-evolving complex (OEC), the ion environment of oxygen evolution and protect the OEC against heat-induced inactivation. Low-potential cytochrome c that plays a role in the OEC of PSII. The sequence is that of Photosystem II extrinsic protein V from Prochlorococcus marinus (strain MIT 9313).